We begin with the raw amino-acid sequence, 240 residues long: Proteasome subunit alpha (240 aa).

It belongs to the peptidase T1A family. In terms of assembly, the 20S proteasome core is composed of 14 alpha and 14 beta subunits that assemble into four stacked heptameric rings, resulting in a barrel-shaped structure. The two inner rings, each composed of seven catalytic beta subunits, are sandwiched by two outer rings, each composed of seven alpha subunits. The catalytic chamber with the active sites is on the inside of the barrel. Has a gated structure, the ends of the cylinder being occluded by the N-termini of the alpha-subunits. Is capped by the proteasome-associated ATPase, ARC.

It is found in the cytoplasm. It functions in the pathway protein degradation; proteasomal Pup-dependent pathway. Its activity is regulated as follows. The formation of the proteasomal ATPase ARC-20S proteasome complex, likely via the docking of the C-termini of ARC into the intersubunit pockets in the alpha-rings, may trigger opening of the gate for substrate entry. Interconversion between the open-gate and close-gate conformations leads to a dynamic regulation of the 20S proteasome proteolysis activity. Component of the proteasome core, a large protease complex with broad specificity involved in protein degradation. The chain is Proteasome subunit alpha from Frankia casuarinae (strain DSM 45818 / CECT 9043 / HFP020203 / CcI3).